Reading from the N-terminus, the 251-residue chain is Ubiquinone/menaquinone biosynthesis C-methyltransferase UbiE (251 aa).

Residues T74, D95, and 123–124 (DA) each bind S-adenosyl-L-methionine.

It belongs to the class I-like SAM-binding methyltransferase superfamily. MenG/UbiE family.

It carries out the reaction a 2-demethylmenaquinol + S-adenosyl-L-methionine = a menaquinol + S-adenosyl-L-homocysteine + H(+). The enzyme catalyses a 2-methoxy-6-(all-trans-polyprenyl)benzene-1,4-diol + S-adenosyl-L-methionine = a 5-methoxy-2-methyl-3-(all-trans-polyprenyl)benzene-1,4-diol + S-adenosyl-L-homocysteine + H(+). It functions in the pathway quinol/quinone metabolism; menaquinone biosynthesis; menaquinol from 1,4-dihydroxy-2-naphthoate: step 2/2. Its pathway is cofactor biosynthesis; ubiquinone biosynthesis. Functionally, methyltransferase required for the conversion of demethylmenaquinol (DMKH2) to menaquinol (MKH2) and the conversion of 2-polyprenyl-6-methoxy-1,4-benzoquinol (DDMQH2) to 2-polyprenyl-3-methyl-6-methoxy-1,4-benzoquinol (DMQH2). The chain is Ubiquinone/menaquinone biosynthesis C-methyltransferase UbiE from Idiomarina loihiensis (strain ATCC BAA-735 / DSM 15497 / L2-TR).